We begin with the raw amino-acid sequence, 204 residues long: Methylthioribulose-1-phosphate dehydratase (204 aa).

Positions 94 and 96 each coordinate Zn(2+).

It belongs to the aldolase class II family. MtnB subfamily. Zn(2+) serves as cofactor.

The catalysed reaction is 5-(methylsulfanyl)-D-ribulose 1-phosphate = 5-methylsulfanyl-2,3-dioxopentyl phosphate + H2O. Its pathway is amino-acid biosynthesis; L-methionine biosynthesis via salvage pathway; L-methionine from S-methyl-5-thio-alpha-D-ribose 1-phosphate: step 2/6. Its function is as follows. Catalyzes the dehydration of methylthioribulose-1-phosphate (MTRu-1-P) into 2,3-diketo-5-methylthiopentyl-1-phosphate (DK-MTP-1-P). This Pseudomonas syringae pv. syringae (strain B728a) protein is Methylthioribulose-1-phosphate dehydratase.